The following is a 257-amino-acid chain: Cytochrome c oxidase subunit 3 (257 aa).

The next 6 membrane-spanning stretches (helical) occupy residues 15 to 35, 82 to 102, 124 to 144, 156 to 176, 194 to 214, and 235 to 255; these read PWPLATGMGAFAMTSGLVKWF, GMILFIISEVFFFVSFFWGFF, FLSALLNTSILLASGVTVTWA, CLQGLLFTVLLGLYFSFLQGL, FFLATGFHGLHVLIGTIFLMI, and AWYWHFVDVVWLFLYLSIYWW.

It belongs to the cytochrome c oxidase subunit 3 family. Component of the cytochrome c oxidase (complex IV, CIV), a multisubunit enzyme composed of a catalytic core of 3 subunits and several supernumerary subunits. The complex exists as a monomer or a dimer and forms supercomplexes (SCs) in the inner mitochondrial membrane with ubiquinol-cytochrome c oxidoreductase (cytochrome b-c1 complex, complex III, CIII).

Its subcellular location is the mitochondrion inner membrane. It catalyses the reaction 4 Fe(II)-[cytochrome c] + O2 + 8 H(+)(in) = 4 Fe(III)-[cytochrome c] + 2 H2O + 4 H(+)(out). Component of the cytochrome c oxidase, the last enzyme in the mitochondrial electron transport chain which drives oxidative phosphorylation. The respiratory chain contains 3 multisubunit complexes succinate dehydrogenase (complex II, CII), ubiquinol-cytochrome c oxidoreductase (cytochrome b-c1 complex, complex III, CIII) and cytochrome c oxidase (complex IV, CIV), that cooperate to transfer electrons derived from NADH and succinate to molecular oxygen, creating an electrochemical gradient over the inner membrane that drives transmembrane transport and the ATP synthase. Cytochrome c oxidase is the component of the respiratory chain that catalyzes the reduction of oxygen to water. Electrons originating from reduced cytochrome c in the intermembrane space (IMS) are transferred via the dinuclear copper A center (CU(A)) of subunit 2 and heme A of subunit 1 to the active site in subunit 1, a binuclear center (BNC) formed by heme A3 and copper B (CU(B)). The BNC reduces molecular oxygen to 2 water molecules using 4 electrons from cytochrome c in the IMS and 4 protons from the mitochondrial matrix. This is Cytochrome c oxidase subunit 3 (COIII) from Artemia franciscana (Brine shrimp).